The sequence spans 526 residues: MTKLSLLPLLALASAVLAKQDAFQAKCASFGHRIKLPNVHVNFVEYVPGGTNLTLPDNHVTCGASSQIVSADMCRVAMAVDTSKSSQITLEAWFPRNYTGRFLSTGNGGLSGCIQYYDLAYTAGLGFATVGANNGHNGTSGKPFYQHPEVIEDFAYRSIHTGVVVGKQLIKMFYSEGFDKSYYLGCSTGGRQGFKSIQKYPNDFDGVVAGAPAFNFVNLISWSIHFYSITGSNTSDTYLSPASWKVVHDEIVRQCDGIDGAKDGIIEDTDLCHPILETIICKPGASSTTNCITGTQAKTVRNVLSPFYGVNGTLLYPRMQPGSELFASSIMYNGQPFSYSTDWYRYVVYNNPNWDATKWTVEDAAVALAQNPYNIQTWDADISSFQKAGGKVLTYHGIQDQLISSDNSKLYYARVAETMGLGPEELDDFYRFFPVSGMAHCSGGDGAYGIGNGLRTYNGAEPENNVLMAMVQWVEKGVAPEFIRGAKFSNGVGSPVEYTRKHCKYPRRNVYKGPGNYSDENAWECV.

The N-terminal stretch at 1 to 18 is a signal peptide; sequence MTKLSLLPLLALASAVLA. 2 disulfides stabilise this stretch: Cys-27-Cys-74 and Cys-62-Cys-113. N-linked (GlcNAc...) asparagine glycans are attached at residues Asn-52, Asn-97, and Asn-137. 4 disulfide bridges follow: Cys-186/Cys-441, Cys-255/Cys-272, Cys-281/Cys-291, and Cys-503/Cys-525. Catalysis depends on Ser-187, which acts as the Acyl-ester intermediate. An N-linked (GlcNAc...) asparagine glycan is attached at Asn-233. Ca(2+) contacts are provided by Asp-256, Asp-259, Ala-261, Asp-263, and Ile-265. An N-linked (GlcNAc...) asparagine glycan is attached at Asn-311. Active-site charge relay system residues include Asp-400 and His-440. Asn-516 carries N-linked (GlcNAc...) asparagine glycosylation.

This sequence belongs to the tannase family.

The protein localises to the secreted. The enzyme catalyses feruloyl-polysaccharide + H2O = ferulate + polysaccharide.. Involved in degradation of plant cell walls. Hydrolyzes the feruloyl-arabinose ester bond in arabinoxylans as well as the feruloyl-galactose and feruloyl-arabinose ester bonds in pectin. This chain is Probable feruloyl esterase B-2 (faeB-2), found in Neosartorya fischeri (strain ATCC 1020 / DSM 3700 / CBS 544.65 / FGSC A1164 / JCM 1740 / NRRL 181 / WB 181) (Aspergillus fischerianus).